A 121-amino-acid polypeptide reads, in one-letter code: Large ribosomal subunit protein bL12 (121 aa).

This sequence belongs to the bacterial ribosomal protein bL12 family. As to quaternary structure, homodimer. Part of the ribosomal stalk of the 50S ribosomal subunit. Forms a multimeric L10(L12)X complex, where L10 forms an elongated spine to which 2 to 4 L12 dimers bind in a sequential fashion. Binds GTP-bound translation factors.

Forms part of the ribosomal stalk which helps the ribosome interact with GTP-bound translation factors. Is thus essential for accurate translation. The polypeptide is Large ribosomal subunit protein bL12 (Ureaplasma parvum serovar 3 (strain ATCC 27815 / 27 / NCTC 11736)).